A 157-amino-acid polypeptide reads, in one-letter code: Protein-export protein SecB (157 aa).

The protein belongs to the SecB family. As to quaternary structure, homotetramer, a dimer of dimers. One homotetramer interacts with 1 SecA dimer.

Its subcellular location is the cytoplasm. In terms of biological role, one of the proteins required for the normal export of preproteins out of the cell cytoplasm. It is a molecular chaperone that binds to a subset of precursor proteins, maintaining them in a translocation-competent state. It also specifically binds to its receptor SecA. The chain is Protein-export protein SecB from Magnetococcus marinus (strain ATCC BAA-1437 / JCM 17883 / MC-1).